Consider the following 479-residue polypeptide: Glycogen synthase (479 aa).

An ADP-alpha-D-glucose-binding site is contributed by Lys-15.

Belongs to the glycosyltransferase 1 family. Bacterial/plant glycogen synthase subfamily.

It carries out the reaction [(1-&gt;4)-alpha-D-glucosyl](n) + ADP-alpha-D-glucose = [(1-&gt;4)-alpha-D-glucosyl](n+1) + ADP + H(+). The protein operates within glycan biosynthesis; glycogen biosynthesis. Its function is as follows. Synthesizes alpha-1,4-glucan chains using ADP-glucose. The polypeptide is Glycogen synthase (Nostoc punctiforme (strain ATCC 29133 / PCC 73102)).